Reading from the N-terminus, the 270-residue chain is uncharacterized protein (270 aa).

A divalent metal cation contacts are provided by Asp53, His55, Asp83, Asn116, His207, and His209.

It belongs to the metallophosphoesterase superfamily. A divalent metal cation serves as cofactor.

This is an uncharacterized protein from Bacillus subtilis (strain 168).